A 117-amino-acid chain; its full sequence is Hemerythrin subunit alpha (117 aa).

7 residues coordinate Fe cation: His24, His53, Glu57, His72, His76, His105, and Asp110.

Belongs to the hemerythrin family. In terms of assembly, octamer composed of two types of chains: alpha and beta.

In terms of biological role, hemerythrin is a respiratory protein in blood cells of certain marine worms. The oxygen-binding site in each chain contains two iron atoms. This chain is Hemerythrin subunit alpha, found in Lingula anatina (Brachiopod).